Reading from the N-terminus, the 465-residue chain is 2-halobenzoate 1,2-dioxygenase large subunit (465 aa).

A Rieske domain is found at 56-154; sequence WVFLAHESQV…GFNVDGSHDL (99 aa). Residues cysteine 98, histidine 100, cysteine 118, and histidine 121 each coordinate [2Fe-2S] cluster. Fe cation contacts are provided by histidine 227 and histidine 232.

The protein belongs to the bacterial ring-hydroxylating dioxygenase alpha subunit family. In terms of assembly, heterohexamer of 3 large (CbdA) subunits and 3 small (CbdB) subunits. The heterohexamer is part of 2-halobenzoate dioxygenase two component enzyme system. The other component is a NADH:acceptor reductase (CdbC). [2Fe-2S] cluster serves as cofactor. Requires Fe(2+) as cofactor.

The catalysed reaction is a 2-halobenzoate + NADH + O2 + H(+) = a halide anion + catechol + CO2 + NAD(+). It functions in the pathway xenobiotic degradation; benzoate degradation via CoA ligation. Functionally, component of 2-halobenzoate dioxygenase multicomponent enzyme system which catalyzes the incorporation of both atoms of molecular oxygen into 2-halobenzoate to form catechol. In Burkholderia cepacia (Pseudomonas cepacia), this protein is 2-halobenzoate 1,2-dioxygenase large subunit (cbdA).